Here is a 426-residue protein sequence, read N- to C-terminus: Mothers against decapentaplegic homolog 7 (426 aa).

Positions 14-42 are disordered; it reads WRSRAPGGEDEEEGVGGGGGGGELRGEGA. N6-acetyllysine; alternate is present on residues Lys64 and Lys70. Glycyl lysine isopeptide (Lys-Gly) (interchain with G-Cter in ubiquitin); alternate cross-links involve residues Lys64 and Lys70. The 144-residue stretch at 64 to 207 folds into the MH1 domain; it reads KAVRGAKGHH…LSRLCELESP (144 aa). Basic residues predominate over residues 67 to 76; it reads RGAKGHHHPH. The disordered stretch occupies residues 67–87; the sequence is RGAKGHHHPHPPTSGAGAAGG. Residues Cys125, Cys180, Cys192, and His197 each coordinate Zn(2+). A PY-motif motif is present at residues 208–211; that stretch reads PPPY. The tract at residues 208 to 217 is important for interaction with SMURF2; that stretch reads PPPYSRYPMD. At Ser249 the chain carries Phosphoserine. Residues 261-426 form the MH2 domain; the sequence is WCVVAYWEEK…CWLEVIFNSR (166 aa).

The protein belongs to the dwarfin/SMAD family. Interacts with COPS5. Interacts with STAMBP. Interacts with PPP1R15A. Interacts with NEDD4L. Interacts with RNF111, AXIN1 and AXIN2. Interacts with ACVR1B, SMURF1, SMURF2 and TGFBR1; SMAD7 recruits SMURF1 and SMURF2 to the TGF-beta receptor and regulates its degradation. Interacts with WWP1. Interacts with PDPK1 (via PH domain). Ubiquitinated by WWP1. Interacts with TSC22D1/TSC-22; the interaction requires TGF-beta and the interaction is inhibited by TGFBR1. Phosphorylation on Ser-249 does not affect its stability, nuclear localization or inhibitory function in TGFB signaling; however it affects its ability to regulate transcription. Phosphorylated by PDPK1. Post-translationally, ubiquitinated by WWP1. Polyubiquitinated by RNF111, which is enhanced by AXIN1 and promotes proteasomal degradation. In response to TGF-beta, ubiquitinated by SMURF1; which promotes its degradation. Ubiquitinated by ARK2C, promoting proteasomal degradation, leading to enhance the BMP-Smad signaling. In terms of processing, acetylation prevents ubiquitination and degradation mediated by SMURF1. Ubiquitous in various organs, with higher levels in brain and kidney.

Its subcellular location is the nucleus. The protein localises to the cytoplasm. Its function is as follows. Antagonist of signaling by TGF-beta (transforming growth factor) type 1 receptor superfamily members; has been shown to inhibit TGF-beta (Transforming growth factor) and activin signaling by associating with their receptors thus preventing SMAD2 access. Functions as an adapter to recruit SMURF2 to the TGF-beta receptor complex. Also acts by recruiting the PPP1R15A-PP1 complex to TGFBR1, which promotes its dephosphorylation. Positively regulates PDPK1 kinase activity by stimulating its dissociation from the 14-3-3 protein YWHAQ which acts as a negative regulator. The protein is Mothers against decapentaplegic homolog 7 (Smad7) of Mus musculus (Mouse).